Consider the following 416-residue polypeptide: Adenylosuccinate synthetase (416 aa).

Residues 11–17 (GDEGKGK) and 39–41 (GHT) each bind GTP. D12 acts as the Proton acceptor in catalysis. 2 residues coordinate Mg(2+): D12 and G39. IMP is bound by residues 12-15 (DEGK), 37-40 (NAGH), T125, R139, Q214, T229, and R290. Residue H40 is the Proton donor of the active site. Residue 286-292 (TTTGRPR) participates in substrate binding. Residues R292, 318–320 (KLD), and 405–407 (SLG) each bind GTP.

It belongs to the adenylosuccinate synthetase family. In terms of assembly, homodimer. Mg(2+) serves as cofactor.

The protein localises to the cytoplasm. It carries out the reaction IMP + L-aspartate + GTP = N(6)-(1,2-dicarboxyethyl)-AMP + GDP + phosphate + 2 H(+). It participates in purine metabolism; AMP biosynthesis via de novo pathway; AMP from IMP: step 1/2. Plays an important role in the de novo pathway of purine nucleotide biosynthesis. Catalyzes the first committed step in the biosynthesis of AMP from IMP. This chain is Adenylosuccinate synthetase, found in Picrophilus torridus (strain ATCC 700027 / DSM 9790 / JCM 10055 / NBRC 100828 / KAW 2/3).